The chain runs to 447 residues: 3-phosphoshikimate 1-carboxyvinyltransferase (447 aa).

The disordered stretch occupies residues 1-22 (MTPSLKRLSGAMRARPAPALSG). Lys-30, Ser-31, and Arg-35 together coordinate 3-phosphoshikimate. Lys-30 lines the phosphoenolpyruvate pocket. Phosphoenolpyruvate-binding residues include Gly-102 and Arg-130. 3-phosphoshikimate contacts are provided by Ser-173, Gln-175, Asp-325, and Lys-352. Gln-175 provides a ligand contact to phosphoenolpyruvate. The active-site Proton acceptor is the Asp-325. 2 residues coordinate phosphoenolpyruvate: Arg-356 and Arg-401.

It belongs to the EPSP synthase family. Monomer.

It localises to the cytoplasm. The enzyme catalyses 3-phosphoshikimate + phosphoenolpyruvate = 5-O-(1-carboxyvinyl)-3-phosphoshikimate + phosphate. It functions in the pathway metabolic intermediate biosynthesis; chorismate biosynthesis; chorismate from D-erythrose 4-phosphate and phosphoenolpyruvate: step 6/7. Catalyzes the transfer of the enolpyruvyl moiety of phosphoenolpyruvate (PEP) to the 5-hydroxyl of shikimate-3-phosphate (S3P) to produce enolpyruvyl shikimate-3-phosphate and inorganic phosphate. This chain is 3-phosphoshikimate 1-carboxyvinyltransferase, found in Maricaulis maris (strain MCS10) (Caulobacter maris).